We begin with the raw amino-acid sequence, 250 residues long: Ubiquinone/menaquinone biosynthesis C-methyltransferase UbiE (250 aa).

Residues Thr-73, Asp-94, and 122-123 (DA) each bind S-adenosyl-L-methionine.

This sequence belongs to the class I-like SAM-binding methyltransferase superfamily. MenG/UbiE family.

The catalysed reaction is a 2-demethylmenaquinol + S-adenosyl-L-methionine = a menaquinol + S-adenosyl-L-homocysteine + H(+). The enzyme catalyses a 2-methoxy-6-(all-trans-polyprenyl)benzene-1,4-diol + S-adenosyl-L-methionine = a 5-methoxy-2-methyl-3-(all-trans-polyprenyl)benzene-1,4-diol + S-adenosyl-L-homocysteine + H(+). The protein operates within quinol/quinone metabolism; menaquinone biosynthesis; menaquinol from 1,4-dihydroxy-2-naphthoate: step 2/2. It participates in cofactor biosynthesis; ubiquinone biosynthesis. Methyltransferase required for the conversion of demethylmenaquinol (DMKH2) to menaquinol (MKH2) and the conversion of 2-polyprenyl-6-methoxy-1,4-benzoquinol (DDMQH2) to 2-polyprenyl-3-methyl-6-methoxy-1,4-benzoquinol (DMQH2). The polypeptide is Ubiquinone/menaquinone biosynthesis C-methyltransferase UbiE (Coxiella burnetii (strain RSA 493 / Nine Mile phase I)).